The chain runs to 171 residues: UPF0316 protein Exig_2248 (171 aa).

3 helical membrane passes run 4-24 (ILLI…RTIM), 31-51 (IIAG…LGIV), and 57-77 (TVGM…GGFV).

The protein belongs to the UPF0316 family.

It localises to the cell membrane. In Exiguobacterium sibiricum (strain DSM 17290 / CCUG 55495 / CIP 109462 / JCM 13490 / 255-15), this protein is UPF0316 protein Exig_2248.